We begin with the raw amino-acid sequence, 180 residues long: Nucleoside-triphosphatase THEP1 (180 aa).

ATP-binding positions include 8-15 and 100-107; these read GPVGSIKA and VIIIDELG.

The protein belongs to the THEP1 NTPase family.

The enzyme catalyses a ribonucleoside 5'-triphosphate + H2O = a ribonucleoside 5'-diphosphate + phosphate + H(+). Its function is as follows. Has nucleotide phosphatase activity towards ATP, GTP, CTP, TTP and UTP. May hydrolyze nucleoside diphosphates with lower efficiency. In Picrophilus torridus (strain ATCC 700027 / DSM 9790 / JCM 10055 / NBRC 100828 / KAW 2/3), this protein is Nucleoside-triphosphatase THEP1.